Consider the following 325-residue polypeptide: Formimidoylglutamase (325 aa).

Mn(2+)-binding residues include H130, D156, H158, D160, C244, and D246.

Belongs to the arginase family. Mn(2+) is required as a cofactor.

The enzyme catalyses N-formimidoyl-L-glutamate + H2O = formamide + L-glutamate. It functions in the pathway amino-acid degradation; L-histidine degradation into L-glutamate; L-glutamate from N-formimidoyl-L-glutamate (hydrolase route): step 1/1. Its function is as follows. Catalyzes the conversion of N-formimidoyl-L-glutamate to L-glutamate and formamide. The chain is Formimidoylglutamase from Geobacillus sp. (strain WCH70).